Consider the following 428-residue polypeptide: Glutamate-1-semialdehyde 2,1-aminomutase (428 aa).

The residue at position 267 (K267) is an N6-(pyridoxal phosphate)lysine.

The protein belongs to the class-III pyridoxal-phosphate-dependent aminotransferase family. HemL subfamily. Homodimer. Pyridoxal 5'-phosphate serves as cofactor.

The protein localises to the cytoplasm. The catalysed reaction is (S)-4-amino-5-oxopentanoate = 5-aminolevulinate. Its pathway is porphyrin-containing compound metabolism; protoporphyrin-IX biosynthesis; 5-aminolevulinate from L-glutamyl-tRNA(Glu): step 2/2. The sequence is that of Glutamate-1-semialdehyde 2,1-aminomutase from Pelobacter propionicus (strain DSM 2379 / NBRC 103807 / OttBd1).